The following is a 396-amino-acid chain: Ribosomal RNA large subunit methyltransferase I (396 aa).

Residues 2-79 form the PUA domain; sequence TSAVYLQAGR…EKEVIDQHFF (78 aa).

This sequence belongs to the methyltransferase superfamily. RlmI family.

Its subcellular location is the cytoplasm. It carries out the reaction cytidine(1962) in 23S rRNA + S-adenosyl-L-methionine = 5-methylcytidine(1962) in 23S rRNA + S-adenosyl-L-homocysteine + H(+). Functionally, specifically methylates the cytosine at position 1962 (m5C1962) of 23S rRNA. This is Ribosomal RNA large subunit methyltransferase I from Pseudoalteromonas translucida (strain TAC 125).